A 308-amino-acid polypeptide reads, in one-letter code: Endonuclease G, mitochondrial (308 aa).

His-148 serves as the catalytic Proton acceptor. Asn-180 contributes to the Mg(2+) binding site.

Belongs to the DNA/RNA non-specific endonuclease family. As to quaternary structure, homodimer; disulfide-linked. Interacts with crn-5, crn-4, crn-1 and cyn-13. It depends on Mg(2+) as a cofactor.

The protein resides in the mitochondrion. Functionally, endonuclease important for programmed cell death; it mediates apoptotic DNA fragmentation. This chain is Endonuclease G, mitochondrial (cps-6), found in Caenorhabditis elegans.